Here is a 778-residue protein sequence, read N- to C-terminus: Endonuclease MutS2 (778 aa).

Residue 328–335 participates in ATP binding; that stretch reads GPNTGGKT. One can recognise a Smr domain in the interval 702-777; the sequence is LDLRGKRYEE…GSGATIVTFK (76 aa).

It belongs to the DNA mismatch repair MutS family. MutS2 subfamily. Homodimer. Binds to stalled ribosomes, contacting rRNA.

Endonuclease that is involved in the suppression of homologous recombination and thus may have a key role in the control of bacterial genetic diversity. In terms of biological role, acts as a ribosome collision sensor, splitting the ribosome into its 2 subunits. Detects stalled/collided 70S ribosomes which it binds and splits by an ATP-hydrolysis driven conformational change. Acts upstream of the ribosome quality control system (RQC), a ribosome-associated complex that mediates the extraction of incompletely synthesized nascent chains from stalled ribosomes and their subsequent degradation. Probably generates substrates for RQC. This is Endonuclease MutS2 from Streptococcus pneumoniae (strain JJA).